Reading from the N-terminus, the 637-residue chain is Chaperone protein HtpG (637 aa).

Positions 1–338 (MTSTIDKNGA…SADLPLNISR (338 aa)) are a; substrate-binding. The interval 339 to 552 (EMIQESPILA…ESGPDRQLEK (214 aa)) is b. The c stretch occupies residues 553 to 637 (ILLGVGQLAG…LRRSSAGGGD (85 aa)).

The protein belongs to the heat shock protein 90 family. In terms of assembly, homodimer.

Its subcellular location is the cytoplasm. In terms of biological role, molecular chaperone. Has ATPase activity. This is Chaperone protein HtpG from Nitrobacter winogradskyi (strain ATCC 25391 / DSM 10237 / CIP 104748 / NCIMB 11846 / Nb-255).